A 263-amino-acid polypeptide reads, in one-letter code: 4-hydroxy-tetrahydrodipicolinate reductase (263 aa).

NAD(+)-binding positions include 7-12 (GFKGRM), 96-98 (GTT), and 122-125 (APNF). His-152 acts as the Proton donor/acceptor in catalysis. His-153 contacts (S)-2,3,4,5-tetrahydrodipicolinate. The active-site Proton donor is Lys-156. 162–163 (GT) contacts (S)-2,3,4,5-tetrahydrodipicolinate.

The protein belongs to the DapB family.

The protein resides in the cytoplasm. It carries out the reaction (S)-2,3,4,5-tetrahydrodipicolinate + NAD(+) + H2O = (2S,4S)-4-hydroxy-2,3,4,5-tetrahydrodipicolinate + NADH + H(+). The enzyme catalyses (S)-2,3,4,5-tetrahydrodipicolinate + NADP(+) + H2O = (2S,4S)-4-hydroxy-2,3,4,5-tetrahydrodipicolinate + NADPH + H(+). It participates in amino-acid biosynthesis; L-lysine biosynthesis via DAP pathway; (S)-tetrahydrodipicolinate from L-aspartate: step 4/4. Functionally, catalyzes the conversion of 4-hydroxy-tetrahydrodipicolinate (HTPA) to tetrahydrodipicolinate. The chain is 4-hydroxy-tetrahydrodipicolinate reductase from Listeria welshimeri serovar 6b (strain ATCC 35897 / DSM 20650 / CCUG 15529 / CIP 8149 / NCTC 11857 / SLCC 5334 / V8).